Here is a 564-residue protein sequence, read N- to C-terminus: MATPNQEAIDTFISITGASDAVALQKLEEHRGDLNQAVNAYFSEGDRNVVREAPVNDDDEMDIDDVIPAPQSPLSMFNAARTIGRPPFSLLDSDFARRVFDSDPLMPRPPFVSHPREVRQIPIEVKDSSGPSGRSSDAPTIEDVTETAHVQGPVTTQGTVIIDEESDDDIPFAPMGRSRQDRPAGSVANNNNQDYNDIEEEMIRAAIEASKKEAEGSSNPLLEERPLHMEDDDDIAIAVTMSLKSAEEEVLRSQGYKASTSEIGASAVTAAQGPQDTQALNGRLAAPSSPFDDDSDDVDEQPLVRHRPRRAASGSLAPPNADRSRSGSPEEEHASINPAERGSGFPSEWGGISSEEHDEAVMLEAAMFGGIPETGYNHLPFLPPQPRAQPRPPSPSLTAQRLIREQQDDEYVASLQADRDKEMKSIRDAEARQLEEETARKAFLEEEKKKEEEAQRKLEEEQELERQLDAKEASLPKEPQADEENAITLLIRMPDGTRRGRRFLKSDKLQTLFNFIDIARVVKPNTYRLVRPYPRHAFGDGESESTLNDLGLTSKQEALFLELI.

A2 bears the N-acetylalanine mark. The UBA-like domain maps to 2-44 (ATPNQEAIDTFISITGASDAVALQKLEEHRGDLNQAVNAYFSE). UIM domains are found at residues 198-217 (IEEE…AEGS) and 230-249 (EDDD…AEEE). Residues 210–229 (SKKEAEGSSNPLLEERPLHM) are disordered. 3 disordered regions span residues 267–358 (AVTA…EEHD), 371–423 (IPET…DKEM), and 443–483 (FLEE…QADE). The span at 291–300 (FDDDSDDVDE) shows a compositional bias: acidic residues. Residues S295, S324, S326, and S328 each carry the phosphoserine modification. Positions 322 to 334 (DRSRSGSPEEEHA) are enriched in basic and acidic residues. Residues 381–395 (FLPPQPRAQPRPPSP) are compositionally biased toward pro residues. Residues 412 to 478 (VASLQADRDK…DAKEASLPKE (67 aa)) are a coiled coil. Positions 443 to 475 (FLEEEKKKEEEAQRKLEEEQELERQLDAKEASL) are enriched in basic and acidic residues. In terms of domain architecture, UBX spans 482 to 560 (DEENAITLLI…GLTSKQEALF (79 aa)).

In terms of assembly, interacts with RABA5C/ARA-4.

The polypeptide is Plant UBX domain-containing protein 8 (Arabidopsis thaliana (Mouse-ear cress)).